The following is a 164-amino-acid chain: uncharacterized protein (164 aa).

A run of 4 helical transmembrane segments spans residues 25-45, 63-83, 120-140, and 141-161; these read QFGFSYGLFGLSGALIYPLLG, GMAVLLLYVPHIGSVVQVYIV, FWTAVFSAAAIMLGGFLADFF, and TVQMIFYASSILYFLSGLMMM.

Belongs to the major facilitator superfamily.

It is found in the cell membrane. This is an uncharacterized protein from Bacillus subtilis (strain 168).